Consider the following 178-residue polypeptide: Fibroin heavy chain (178 aa).

Residues 1-21 (MRVKTFVILCCALQYVAYTNA) form the signal peptide. The tract at residues 149 to 178 (AVGAGAGAGAAAGSGAGAGAGYGAASGAGA) is highly repetitive.

Silk fibroin elementary unit consists in a disulfide-linked heavy and light chain and a p25 glycoprotein in molar ratios of 6:6:1. This results in a complex of approximately 2.3 MDa. The interchain disulfide bridge is essential for the intracellular transport and secretion of fibroin. In terms of tissue distribution, produced exclusively in the posterior (PSG) section of silk glands, which are essentially modified salivary glands.

In terms of biological role, core component of the silk filament; a strong, insoluble and chemically inert fiber. This chain is Fibroin heavy chain (FIBH), found in Bombyx mandarina (Wild silk moth).